Consider the following 634-residue polypeptide: MNETVANNKETRGFQSEVKQLLHLMIHSLYSNKEIFLRELISNASDAADKLRFQALSNPALYENDAELGVKLSFNEEHNTLTISDNGIGMSREEVISHLGTIAKSGTAEFFSKLSQEQSKDSQLIGQFGVGFYSAFIVADAVTVRTRAAGLNADQAVLWHSAGEGEYTVEDITKESRGTDIILHMREDGKEFLNEWRLRDVIGKYSDHIGIPVSIQTRVRDEEGKETEEVKWEQINKAQALWTRNKSDISDEEYQEFYKHVSHDFADPLLWSHNRVEGKNDYTSLLYIPSKAPWDMMNRDHKSGLKLYVQRVFIMDDAEQFMPSYLRFVRGLIDSNDLPLNVSREILQDNKVTQSLRGACTKRVLTMLERLAKNDTEKYQTFWKEFGLVMKEGPAEDYANREKVAALLRFASTEVDSAEQTVSLESYVERMKEGQDKIYYLTADSYAAAKNSPHLEQFKAKGLEVILMFDRIDEWLMNYLTEFDGKQFQSITKAGLDLSQFEDEQEKEKQKETEQEFQSVVERTKSYLGDRVKEVRTTFKLANTPAVVVTDDFEMGTQMAKLLAAAGQAVPEVKYIFEINPNHTLVKQMADEADEEAFGRWVEVLLGQAMLAERGSMEDPSQFLTAINSLLTKG.

The interval 1–344 (MNETVANNKE…SNDLPLNVSR (344 aa)) is a; substrate-binding. Residues 345–561 (EILQDNKVTQ…DFEMGTQMAK (217 aa)) form a b region. The segment at 562–634 (LLAAAGQAVP…TAINSLLTKG (73 aa)) is c.

It belongs to the heat shock protein 90 family. Homodimer.

It localises to the cytoplasm. Molecular chaperone. Has ATPase activity. In Vibrio vulnificus (strain YJ016), this protein is Chaperone protein HtpG.